A 117-amino-acid polypeptide reads, in one-letter code: Ig heavy chain V region 5-84 (117 aa).

The first 19 residues, 1 to 19 (MNFGLSLIFLVLVLKGVLC), serve as a signal peptide directing secretion. Positions 20–49 (EVKLVESGGGLVQPGGSLKLSCAASGFTFS) are framework-1. The cysteines at positions 41 and 115 are disulfide-linked. Residues 50-54 (SYTMS) are complementarity-determining-1. Residues 55-68 (WVRQTPEKRLEWVA) are framework-2. Positions 69-85 (YISNGGGSTYYPDTVKG) are complementarity-determining-2. The tract at residues 86-117 (RFTISRDNAKNNLYLQMSSLKSEDTAMYYCAR) is framework-3.

The sequence is that of Ig heavy chain V region 5-84 from Mus musculus (Mouse).